Here is a 296-residue protein sequence, read N- to C-terminus: 4-hydroxy-tetrahydrodipicolinate synthase (296 aa).

Thr49 contributes to the pyruvate binding site. The Proton donor/acceptor role is filled by Tyr137. Catalysis depends on Lys166, which acts as the Schiff-base intermediate with substrate. Residue Ile208 coordinates pyruvate.

The protein belongs to the DapA family. As to quaternary structure, homotetramer; dimer of dimers.

It is found in the cytoplasm. It catalyses the reaction L-aspartate 4-semialdehyde + pyruvate = (2S,4S)-4-hydroxy-2,3,4,5-tetrahydrodipicolinate + H2O + H(+). It functions in the pathway amino-acid biosynthesis; L-lysine biosynthesis via DAP pathway; (S)-tetrahydrodipicolinate from L-aspartate: step 3/4. Functionally, catalyzes the condensation of (S)-aspartate-beta-semialdehyde [(S)-ASA] and pyruvate to 4-hydroxy-tetrahydrodipicolinate (HTPA). The polypeptide is 4-hydroxy-tetrahydrodipicolinate synthase (Pelodictyon phaeoclathratiforme (strain DSM 5477 / BU-1)).